Consider the following 455-residue polypeptide: Probable multidrug resistance protein NorM (455 aa).

The next 12 membrane-spanning stretches (helical) occupy residues 13–31 (RLFA…QYAM), 51–73 (AIGS…ALSP), 94–116 (ALYL…VPFI), 131–150 (FHYL…YSVL), 162–184 (VTMW…LIYG), 194–216 (IGTG…FAAL), 245–267 (GVPI…LLVG), 282–304 (NFAS…AVGV), 317–339 (YCLI…LSAF), 352–369 (TVAA…FFQV), 390–412 (VFWS…LALL), and 417–439 (AFGY…SFRL).

This sequence belongs to the multi antimicrobial extrusion (MATE) (TC 2.A.66.1) family.

Its subcellular location is the cell membrane. Its function is as follows. Multidrug efflux pump. The sequence is that of Probable multidrug resistance protein NorM (norM) from Geobacillus kaustophilus (strain HTA426).